The chain runs to 149 residues: D-aminoacyl-tRNA deacylase (149 aa).

A Gly-cisPro motif, important for rejection of L-amino acids motif is present at residues 137–138 (GP).

Belongs to the DTD family. As to quaternary structure, homodimer.

The protein localises to the cytoplasm. The catalysed reaction is glycyl-tRNA(Ala) + H2O = tRNA(Ala) + glycine + H(+). It catalyses the reaction a D-aminoacyl-tRNA + H2O = a tRNA + a D-alpha-amino acid + H(+). In terms of biological role, an aminoacyl-tRNA editing enzyme that deacylates mischarged D-aminoacyl-tRNAs. Also deacylates mischarged glycyl-tRNA(Ala), protecting cells against glycine mischarging by AlaRS. Acts via tRNA-based rather than protein-based catalysis; rejects L-amino acids rather than detecting D-amino acids in the active site. By recycling D-aminoacyl-tRNA to D-amino acids and free tRNA molecules, this enzyme counteracts the toxicity associated with the formation of D-aminoacyl-tRNA entities in vivo and helps enforce protein L-homochirality. The polypeptide is D-aminoacyl-tRNA deacylase (Fervidobacterium nodosum (strain ATCC 35602 / DSM 5306 / Rt17-B1)).